The primary structure comprises 61 residues: Large ribosomal subunit protein uL29 (61 aa).

Belongs to the universal ribosomal protein uL29 family.

This is Large ribosomal subunit protein uL29 from Nitratidesulfovibrio vulgaris (strain ATCC 29579 / DSM 644 / CCUG 34227 / NCIMB 8303 / VKM B-1760 / Hildenborough) (Desulfovibrio vulgaris).